Here is a 158-residue protein sequence, read N- to C-terminus: Ribosomal RNA large subunit methyltransferase H (158 aa).

S-adenosyl-L-methionine contacts are provided by residues Leu-73, Gly-107, and 126–131 (FGEITL).

Belongs to the RNA methyltransferase RlmH family. As to quaternary structure, homodimer.

It is found in the cytoplasm. It carries out the reaction pseudouridine(1915) in 23S rRNA + S-adenosyl-L-methionine = N(3)-methylpseudouridine(1915) in 23S rRNA + S-adenosyl-L-homocysteine + H(+). Functionally, specifically methylates the pseudouridine at position 1915 (m3Psi1915) in 23S rRNA. In Rubrobacter xylanophilus (strain DSM 9941 / JCM 11954 / NBRC 16129 / PRD-1), this protein is Ribosomal RNA large subunit methyltransferase H.